A 181-amino-acid polypeptide reads, in one-letter code: Protein Syd (181 aa).

Belongs to the Syd family.

Its subcellular location is the cell inner membrane. Functionally, interacts with the SecY protein in vivo. May bind preferentially to an uncomplexed state of SecY, thus functioning either as a chelating agent for excess SecY in the cell or as a regulatory factor that negatively controls the translocase function. This Shigella flexneri protein is Protein Syd.